The chain runs to 75 residues: U6-lycotoxin-Ls1h (75 aa).

A signal peptide spans 1–21; it reads MKLLLFTALVLVVISLIEVEA. A propeptide spanning residues 22-25 is cleaved from the precursor; the sequence is ENER.

It belongs to the neurotoxin 19 (CSTX) family. 06 (U6-Lctx) subfamily. Contains 4 disulfide bonds. Expressed by the venom gland.

The protein localises to the secreted. This is U6-lycotoxin-Ls1h from Lycosa singoriensis (Wolf spider).